The primary structure comprises 79 residues: Acyl carrier protein (79 aa).

Positions 2–77 constitute a Carrier domain; sequence SNIEERVKKI…QAIDYINAHA (76 aa). O-(pantetheine 4'-phosphoryl)serine is present on Ser37.

It belongs to the acyl carrier protein (ACP) family. In terms of processing, 4'-phosphopantetheine is transferred from CoA to a specific serine of apo-ACP by AcpS. This modification is essential for activity because fatty acids are bound in thioester linkage to the sulfhydryl of the prosthetic group.

It is found in the cytoplasm. It functions in the pathway lipid metabolism; fatty acid biosynthesis. Its function is as follows. Carrier of the growing fatty acid chain in fatty acid biosynthesis. The protein is Acyl carrier protein of Thioalkalivibrio sulfidiphilus (strain HL-EbGR7).